The following is a 271-amino-acid chain: Type III pantothenate kinase (271 aa).

6–13 (DVRNTNIV) is an ATP binding site. 109–112 (GADR) provides a ligand contact to substrate. The Proton acceptor role is filled by Asp111. Asp131 serves as a coordination point for K(+). Residue Thr134 participates in ATP binding. Thr186 contacts substrate.

The protein belongs to the type III pantothenate kinase family. Homodimer. NH4(+) is required as a cofactor. K(+) serves as cofactor.

It localises to the cytoplasm. The catalysed reaction is (R)-pantothenate + ATP = (R)-4'-phosphopantothenate + ADP + H(+). It participates in cofactor biosynthesis; coenzyme A biosynthesis; CoA from (R)-pantothenate: step 1/5. In terms of biological role, catalyzes the phosphorylation of pantothenate (Pan), the first step in CoA biosynthesis. This Rhodococcus opacus (strain B4) protein is Type III pantothenate kinase.